The chain runs to 247 residues: NAD-dependent protein deacetylase (247 aa).

A Deacetylase sirtuin-type domain is found at 1 to 247 (MDTRKNLKEL…LGGIVEELGY (247 aa)). NAD(+) contacts are provided by A23, T27, F34, R35, Q104, I106, D107, and H122. Position 34 (F34) interacts with nicotinamide. I106 and D107 together coordinate nicotinamide. H122 serves as the catalytic Proton acceptor. Positions 130, 133, 152, and 155 each coordinate Zn(2+). Residues T193, S194, N216, and I234 each coordinate NAD(+).

It belongs to the sirtuin family. Class U subfamily. Zn(2+) is required as a cofactor.

It localises to the cytoplasm. The catalysed reaction is N(6)-acetyl-L-lysyl-[protein] + NAD(+) + H2O = 2''-O-acetyl-ADP-D-ribose + nicotinamide + L-lysyl-[protein]. NAD-dependent protein deacetylase which modulates the activities of several enzymes which are inactive in their acetylated form. The polypeptide is NAD-dependent protein deacetylase (Clostridium tetani (strain Massachusetts / E88)).